The primary structure comprises 201 residues: Small ribosomal subunit protein uS4 (201 aa).

Residues 91 to 157 (SRLDNVVYRA…LPFQVARETV (67 aa)) enclose the S4 RNA-binding domain.

This sequence belongs to the universal ribosomal protein uS4 family. In terms of assembly, part of the 30S ribosomal subunit. Contacts protein S5. The interaction surface between S4 and S5 is involved in control of translational fidelity.

Its function is as follows. One of the primary rRNA binding proteins, it binds directly to 16S rRNA where it nucleates assembly of the body of the 30S subunit. With S5 and S12 plays an important role in translational accuracy. This Rhodococcus erythropolis (strain PR4 / NBRC 100887) protein is Small ribosomal subunit protein uS4.